A 430-amino-acid chain; its full sequence is Sesquiterpene synthase Agr5 (430 aa).

The first 25 residues, 1–25 (MASSLLEPSLAAIALVILLASVSLS), serve as a signal peptide directing secretion. The N-linked (GlcNAc...) asparagine glycan is linked to Asn-113. Mg(2+)-binding residues include Asp-176, Asn-311, Ser-315, and Glu-319. The DDXXD motif signature appears at 176 to 180 (DEYTD). (2E,6E)-farnesyl diphosphate is bound by residues Arg-401 and Tyr-402.

It belongs to the terpene synthase family. It depends on Mg(2+) as a cofactor.

It catalyses the reaction (2E,6E)-farnesyl diphosphate = viridiflorene + diphosphate. In terms of biological role, terpene cyclase that catalyzes the cyclization of farnesyl diphosphate (FPP) to viridiflorene and viridiflorol. The polypeptide is Sesquiterpene synthase Agr5 (Cyclocybe aegerita (Black poplar mushroom)).